The sequence spans 165 residues: 2-halobenzoate 1,2-dioxygenase small subunit (165 aa).

It belongs to the bacterial ring-hydroxylating dioxygenase beta subunit family. As to quaternary structure, heterohexamer of 3 large (CbdA) subunits and 3 small (CbdB) subunits. The heterohexamer is part of 2-halobenzoate dioxygenase two component enzyme system. The other component is a NADH:acceptor reductase (CdbC).

The enzyme catalyses a 2-halobenzoate + NADH + O2 + H(+) = a halide anion + catechol + CO2 + NAD(+). It participates in xenobiotic degradation; benzoate degradation via CoA ligation. Functionally, component of 2-halobenzoate dioxygenase multicomponent enzyme system which catalyzes the incorporation of both atoms of molecular oxygen into 2-halobenzoate to form catechol. The sequence is that of 2-halobenzoate 1,2-dioxygenase small subunit (cbdB) from Burkholderia cepacia (Pseudomonas cepacia).